The chain runs to 146 residues: Large-conductance mechanosensitive channel (146 aa).

3 helical membrane-spanning segments follow: residues 17 to 37 (IDLA…DSLV), 40 to 60 (IIMP…QKFV), and 89 to 109 (LTIL…VKLI).

The protein belongs to the MscL family. As to quaternary structure, homopentamer.

It is found in the cell inner membrane. Functionally, channel that opens in response to stretch forces in the membrane lipid bilayer. May participate in the regulation of osmotic pressure changes within the cell. The polypeptide is Large-conductance mechanosensitive channel (Acinetobacter baylyi (strain ATCC 33305 / BD413 / ADP1)).